A 192-amino-acid chain; its full sequence is Der GTPase-activating protein YihI (192 aa).

Positions Met-1 to Pro-80 are disordered. Basic and acidic residues-rich tracts occupy residues Arg-9–Gln-25, Thr-37–Glu-48, and Asp-65–Pro-80.

Belongs to the YihI family. In terms of assembly, interacts with Der.

In terms of biological role, a GTPase-activating protein (GAP) that modifies Der/EngA GTPase function. May play a role in ribosome biogenesis. The chain is Der GTPase-activating protein YihI from Actinobacillus pleuropneumoniae serotype 5b (strain L20).